Reading from the N-terminus, the 86-residue chain is Small ribosomal subunit protein bS18 (86 aa).

This sequence belongs to the bacterial ribosomal protein bS18 family. Part of the 30S ribosomal subunit. Forms a tight heterodimer with protein bS6.

Binds as a heterodimer with protein bS6 to the central domain of the 16S rRNA, where it helps stabilize the platform of the 30S subunit. The chain is Small ribosomal subunit protein bS18 from Maridesulfovibrio salexigens (strain ATCC 14822 / DSM 2638 / NCIMB 8403 / VKM B-1763) (Desulfovibrio salexigens).